The sequence spans 173 residues: Copper transport protein ctr5 (173 aa).

Residues Met1–Lys54 lie on the Extracellular side of the membrane. Residues Phe55 to Val75 traverse the membrane as a helical segment. The Cytoplasmic portion of the chain corresponds to Gln76–Ser135. Residues Phe136–Ala156 traverse the membrane as a helical segment. The Extracellular portion of the chain corresponds to Ser157–Arg173.

This sequence belongs to the copper transporter (Ctr) (TC 1.A.56) family. SLC31A subfamily. In terms of assembly, interacts with ctr4.

It is found in the membrane. Required for high affinity copper (probably reduced Cu I) transport into the cell. This Schizosaccharomyces pombe (strain 972 / ATCC 24843) (Fission yeast) protein is Copper transport protein ctr5 (ctr5).